We begin with the raw amino-acid sequence, 248 residues long: Cutinase cut1 (248 aa).

The first 17 residues, 1–17 (MRSLSLFTALLAGQAFA), serve as a signal peptide directing secretion. C79 and C153 are oxidised to a cystine. The active-site Nucleophile is S164. Residues C212 and C219 are joined by a disulfide bond. Residue D216 is part of the active site. Residue H229 is the Proton donor/acceptor of the active site.

This sequence belongs to the cutinase family. In terms of processing, the 2 disulfide bonds play a critical role in holding the catalytic residues in juxta-position; reduction of the disulfide bridges results in the complete inactivation of the enzyme.

The protein resides in the secreted. The enzyme catalyses cutin + H2O = cutin monomers.. Functionally, catalyzes the hydrolysis of complex carboxylic polyesters found in the cell wall of plants. May degrade cutin, a macromolecule that forms the structure of the plant cuticle. May also degrade suberin, a specialized macromolecule found in the cell wall of various plant tissues. This is Cutinase cut1 from Trichoderma harzianum (Hypocrea lixii).